A 188-amino-acid polypeptide reads, in one-letter code: Ribosome-recycling factor (188 aa).

This sequence belongs to the RRF family.

The protein localises to the cytoplasm. In terms of biological role, responsible for the release of ribosomes from messenger RNA at the termination of protein biosynthesis. May increase the efficiency of translation by recycling ribosomes from one round of translation to another. In Cereibacter sphaeroides (strain ATCC 17023 / DSM 158 / JCM 6121 / CCUG 31486 / LMG 2827 / NBRC 12203 / NCIMB 8253 / ATH 2.4.1.) (Rhodobacter sphaeroides), this protein is Ribosome-recycling factor.